A 457-amino-acid polypeptide reads, in one-letter code: Bifunctional protein GlmU (457 aa).

A pyrophosphorylase region spans residues 1–232; the sequence is MAKVAAIVLA…PMEVMGVNDR (232 aa). Residues 9 to 12, Lys-23, Gln-75, and 80 to 81 each bind UDP-N-acetyl-alpha-D-glucosamine; these read LAAG and GT. Asp-105 is a Mg(2+) binding site. 4 residues coordinate UDP-N-acetyl-alpha-D-glucosamine: Gly-142, Glu-157, Asn-172, and Asn-230. Mg(2+) is bound at residue Asn-230. The linker stretch occupies residues 233-253; it reads VQLAEAGRIIRVRINKALMVA. Positions 254–457 are N-acetyltransferase; the sequence is GTTIIDPETT…NKEGWKLKNK (204 aa). UDP-N-acetyl-alpha-D-glucosamine contacts are provided by Arg-336 and Lys-354. His-366 (proton acceptor) is an active-site residue. Positions 369 and 380 each coordinate UDP-N-acetyl-alpha-D-glucosamine. Acetyl-CoA contacts are provided by residues 389–390, Ser-408, Ala-426, and Arg-443; that span reads NY.

This sequence in the N-terminal section; belongs to the N-acetylglucosamine-1-phosphate uridyltransferase family. It in the C-terminal section; belongs to the transferase hexapeptide repeat family. As to quaternary structure, homotrimer. Requires Mg(2+) as cofactor.

Its subcellular location is the cytoplasm. It carries out the reaction alpha-D-glucosamine 1-phosphate + acetyl-CoA = N-acetyl-alpha-D-glucosamine 1-phosphate + CoA + H(+). The enzyme catalyses N-acetyl-alpha-D-glucosamine 1-phosphate + UTP + H(+) = UDP-N-acetyl-alpha-D-glucosamine + diphosphate. It participates in nucleotide-sugar biosynthesis; UDP-N-acetyl-alpha-D-glucosamine biosynthesis; N-acetyl-alpha-D-glucosamine 1-phosphate from alpha-D-glucosamine 6-phosphate (route II): step 2/2. Its pathway is nucleotide-sugar biosynthesis; UDP-N-acetyl-alpha-D-glucosamine biosynthesis; UDP-N-acetyl-alpha-D-glucosamine from N-acetyl-alpha-D-glucosamine 1-phosphate: step 1/1. The protein operates within bacterial outer membrane biogenesis; LPS lipid A biosynthesis. Catalyzes the last two sequential reactions in the de novo biosynthetic pathway for UDP-N-acetylglucosamine (UDP-GlcNAc). The C-terminal domain catalyzes the transfer of acetyl group from acetyl coenzyme A to glucosamine-1-phosphate (GlcN-1-P) to produce N-acetylglucosamine-1-phosphate (GlcNAc-1-P), which is converted into UDP-GlcNAc by the transfer of uridine 5-monophosphate (from uridine 5-triphosphate), a reaction catalyzed by the N-terminal domain. This Geotalea daltonii (strain DSM 22248 / JCM 15807 / FRC-32) (Geobacter daltonii) protein is Bifunctional protein GlmU.